Consider the following 124-residue polypeptide: MPTINQLVRKGRRDKIAKVKTAALKGSPQRRGVCTRVYTTTPKKPNSALRKVARVKLTSQVEVTAYIPGEGHNLQEHSMVLVRGGRVKDLPGVRYKIIRGSLDTQGVKNRKQARSRYGAKKEKS.

Residue Asp-89 is modified to 3-methylthioaspartic acid. The interval 105-124 is disordered; sequence QGVKNRKQARSRYGAKKEKS. Positions 108 to 118 are enriched in basic residues; it reads KNRKQARSRYG.

The protein belongs to the universal ribosomal protein uS12 family. In terms of assembly, part of the 30S ribosomal subunit. Contacts proteins S8 and S17. May interact with IF1 in the 30S initiation complex.

Functionally, with S4 and S5 plays an important role in translational accuracy. Interacts with and stabilizes bases of the 16S rRNA that are involved in tRNA selection in the A site and with the mRNA backbone. Located at the interface of the 30S and 50S subunits, it traverses the body of the 30S subunit contacting proteins on the other side and probably holding the rRNA structure together. The combined cluster of proteins S8, S12 and S17 appears to hold together the shoulder and platform of the 30S subunit. The protein is Small ribosomal subunit protein uS12 of Mycobacterium sp. (strain JLS).